Here is a 233-residue protein sequence, read N- to C-terminus: CDP-diacylglycerol--glycerol-3-phosphate 3-phosphatidyltransferase 2 (233 aa).

The segment at 1–23 (MGEEDTATVDQNSFGGGKDSLLR) is disordered. Helical transmembrane passes span 40–60 (VITL…ILVA), 71–91 (TATT…GYIA), 100–120 (FGAF…LILL), 125–145 (MVAV…IAII), and 201–221 (LPSG…SLVV).

This sequence belongs to the CDP-alcohol phosphatidyltransferase class-I family. Requires Mn(2+) as cofactor.

Its subcellular location is the microsome membrane. It localises to the endoplasmic reticulum membrane. The catalysed reaction is a CDP-1,2-diacyl-sn-glycerol + sn-glycerol 3-phosphate = a 1,2-diacyl-sn-glycero-3-phospho-(1'-sn-glycero-3'-phosphate) + CMP + H(+). It participates in phospholipid metabolism; phosphatidylglycerol biosynthesis; phosphatidylglycerol from CDP-diacylglycerol: step 1/2. Functionally, catalyzes the committed step to the synthesis of the acidic phospholipids, including phosphatidylglycerol (PG). Together with PGPS1, required for the proper embryo development by providing PG accurate levels. This chain is CDP-diacylglycerol--glycerol-3-phosphate 3-phosphatidyltransferase 2, found in Arabidopsis thaliana (Mouse-ear cress).